Consider the following 322-residue polypeptide: MSQNEQQYLDLAQKILDEGSHKGDRTGTGTRSLFGTQMRFNLAEGFPLLTTKKVFFGLIKSELLWFLRGDNNIRFLLEHNNHIWDEWAFKKWIESDKYTGPDMTNFGLRSQTDENFAKIYKEQKDIFVNNILNDDEFKEEFGYIGNVYGKLWRSWETNSLTAGDETVDQVARLIDQIKETPNSRRLILTAWNAETTPQAPLPSCHVLSQFYVADGKLSLQMYQRSGDFFLGVPFNIASYSLLLHMVAAQTGYEVGEFIHTIGDTHIYNNHVDQITEQLSRPMHKLPKLWLNPEVKSLFDYTMDDIKILDYDSEPAIKAPVAV.

DUMP is bound by residues Arg-25 and 184-185 (RR). Cys-204 functions as the Nucleophile in the catalytic mechanism. DUMP-binding positions include 224 to 227 (RSGD), Asn-235, and 265 to 267 (HIY). Residue Asp-227 participates in (6R)-5,10-methylene-5,6,7,8-tetrahydrofolate binding. A (6R)-5,10-methylene-5,6,7,8-tetrahydrofolate-binding site is contributed by Ala-321.

This sequence belongs to the thymidylate synthase family. Bacterial-type ThyA subfamily. Homodimer.

The protein localises to the cytoplasm. The catalysed reaction is dUMP + (6R)-5,10-methylene-5,6,7,8-tetrahydrofolate = 7,8-dihydrofolate + dTMP. It participates in pyrimidine metabolism; dTTP biosynthesis. In terms of biological role, catalyzes the reductive methylation of 2'-deoxyuridine-5'-monophosphate (dUMP) to 2'-deoxythymidine-5'-monophosphate (dTMP) while utilizing 5,10-methylenetetrahydrofolate (mTHF) as the methyl donor and reductant in the reaction, yielding dihydrofolate (DHF) as a by-product. This enzymatic reaction provides an intracellular de novo source of dTMP, an essential precursor for DNA biosynthesis. The chain is Thymidylate synthase from Leuconostoc mesenteroides subsp. mesenteroides (strain ATCC 8293 / DSM 20343 / BCRC 11652 / CCM 1803 / JCM 6124 / NCDO 523 / NBRC 100496 / NCIMB 8023 / NCTC 12954 / NRRL B-1118 / 37Y).